The following is a 229-amino-acid chain: 2-C-methyl-D-erythritol 4-phosphate cytidylyltransferase (229 aa).

The protein belongs to the IspD/TarI cytidylyltransferase family. IspD subfamily.

It carries out the reaction 2-C-methyl-D-erythritol 4-phosphate + CTP + H(+) = 4-CDP-2-C-methyl-D-erythritol + diphosphate. It participates in isoprenoid biosynthesis; isopentenyl diphosphate biosynthesis via DXP pathway; isopentenyl diphosphate from 1-deoxy-D-xylulose 5-phosphate: step 2/6. Functionally, catalyzes the formation of 4-diphosphocytidyl-2-C-methyl-D-erythritol from CTP and 2-C-methyl-D-erythritol 4-phosphate (MEP). The protein is 2-C-methyl-D-erythritol 4-phosphate cytidylyltransferase of Neisseria meningitidis serogroup B (strain ATCC BAA-335 / MC58).